Here is an 833-residue protein sequence, read N- to C-terminus: MSGAYRGRGFGRGRFQSWKRGRGGGNFSGRWRERENRVDLNEASGKHASAQASQPLLQQSTLDQFIPYKGWKLYFSEVYSNNSPFIEKIQAFEKFFTRHIDLYDKDEIERKGSILVDFKELTKADEITNLIPDIENALRDAPEKTLACMGLAIHQVLTKDLERHAAELQAQEGLSNGGETMVNVPHIYARVYNYEPLTHLKNIRATCYGKYISIRGTVVRVSNIKPLCTNMAFQCAACGEIQSFPLPDGKYTLPTKCPVPACRGRSFAPLRSSPLTVTLDWQLIKIQELMSDAQREAGRIPRTIECELVHDLVDSCVPGDTVTVTGIVKVSNSEEGSRNKNDKCMFLLYIEANSVSNSKGPKAQTAEDGCKHGTLMEFSLKDLYAIREIQAEENLLKLVVNSLCPVIFGHELVKAGLTLALFGGSQKYADDKNRIPIRGDPHVLIVGDPGLGKSQMLQAACNVAPRGVYVCGNTTTSSGLTVTLSKDSSSGDFALEAGALVLGDQGICGIDEFDKMGNQHQALLEAMEQQSISLAKAGVVCSLPARTSIIAAANPVGGHYNKARTVSENLKMGSALLSRFDLVFILLDTPNEQHDHLLSEHVIAIRAGKQKAVSSATVTRVLSQDSNTSVLEVVSEKPLSERLKVAPGEQTDPIPHQLLRKYIGYARQYVHPRLSTDAAQALQDFYLELRKQSQRVGSSPITTRQLESLIRLTEARARLELREEATREDAEDIIEIMKHSMLGTYSDEFGNLDFERSQHGSGMSNRSTAKRFISALNSIAERTYNNIFQYHQLRQIAKELNIQVADFENFIGSLNDQGYLLKKGPKIYQLQTM.

Residues 395-602 form the MCM domain; that stretch reads LLKLVVNSLC…QHDHLLSEHV (208 aa). 447-454 serves as a coordination point for ATP; sequence GDPGLGKS. At serine 623 the chain carries Phosphoserine.

This sequence belongs to the MCM family. As to quaternary structure, component of the MCM8-MCM9 complex, which forms a hexamer composed of MCM8 and MCM9. Interacts with the DNA mismatch repair (MMR) complex composed at least of MSH2, MSH3, MSH6, PMS1 and MLH1. Interacts with RAD51; the interaction recruits RAD51 to DNA damage sites. Interacts with the MRN complex composed of MRE11, RAD50 and NBN/NBS1. Interacts with CDC6 and ORC2. Interacts with HROB; the interaction recruits the MCM8-MCM9 complex to DNA damage sites.

It localises to the nucleus. Its subcellular location is the chromosome. It carries out the reaction ATP + H2O = ADP + phosphate + H(+). In terms of biological role, component of the MCM8-MCM9 complex, a complex involved in the repair of double-stranded DNA breaks (DBSs) and DNA interstrand cross-links (ICLs) by homologous recombination (HR). Required for DNA resection by the MRE11-RAD50-NBN/NBS1 (MRN) complex by recruiting the MRN complex to the repair site and by promoting the complex nuclease activity. Probably by regulating the localization of the MNR complex, indirectly regulates the recruitment of downstream effector RAD51 to DNA damage sites including DBSs and ICLs. The MCM8-MCM9 complex is dispensable for DNA replication and S phase progression. However, may play a non-essential for DNA replication: may be involved in the activation of the prereplicative complex (pre-RC) during G(1) phase by recruiting CDC6 to the origin recognition complex (ORC). Probably by regulating HR, plays a key role during gametogenesis. Stabilizes MCM9 protein. The chain is DNA helicase MCM8 (Mcm8) from Mus musculus (Mouse).